Here is a 342-residue protein sequence, read N- to C-terminus: MTQFNIPVTMSSSLSIILVILVSLRTALSELCNPQDKQALLQIKKDLGNPTTLSSWLPTTDCCNRTWLGVLCDTDTQTYRVNNLDLSGHNLPKPYPIPSSLANLPYLNFLYIGGINNLVGPIPPAIAKLTQLHYLYITHTNVSGAIPDFLSQIKTLVTLDFSYNALSGTLPPSISSLPNLGGITFDGNRISGAIPDSYGSFSKLFTAMTISRNRLTGKIPPTFANLNLAFVDLSRNMLEGDASVLFGSDKNTKKIHLAKNSLAFDLGKVGLSKNLNGLDLRNNRIYGTLPQGLTQLKFLQSLNVSFNNLCGEIPQGGNLKRFDVSSYANNKCLCGSPLPSCT.

A signal peptide spans 1–29 (MTQFNIPVTMSSSLSIILVILVSLRTALS). Cystine bridges form between C32–C62 and C63–C72. An N-linked (GlcNAc...) asparagine glycan is attached at N64. LRR repeat units follow at residues 82–107 (NNLDLSGHNLPKPYPIPSSLANLPYL), 108–132 (NFLYIGGINNLVGPIPPAIAKLTQL), 133–156 (HYLYITHTNVSGAIPDFLSQIKTL), 157–180 (VTLDFSYNALSGTLPPSISSLPNL), 181–205 (GGITFDGNRISGAIPDSYGSFSKLF), 206–228 (TAMTISRNRLTGKIPPTFANLNL), 229–252 (AFVDLSRNMLEGDASVLFGSDKNT), 253–275 (KKIHLAKNSLAFDLGKVGLSKNL), 276–299 (NGLDLRNNRIYGTLPQGLTQLKFL), and 300–319 (QSLNVSFNNLCGEIPQGGNL). Residue N141 is glycosylated (N-linked (GlcNAc...) asparagine). The N-linked (GlcNAc...) asparagine glycan is linked to N303. 2 disulfide bridges follow: C310-C332 and C334-C341.

Belongs to the polygalacturonase-inhibiting protein family.

Its subcellular location is the secreted. The protein localises to the cell wall. The protein resides in the membrane. Functionally, inhibitor of fungal polygalacturonase. It is an important factor for plant resistance to phytopathogenic fungi. Substrate preference is polygalacturonase (PG) from A.niger &gt;&gt; PG of F.oxysporum, A.solani or B.cinerea. Not active on PG from F.moniliforme. This chain is Polygalacturonase inhibitor 1 (PGIP1), found in Phaseolus vulgaris (Kidney bean).